The chain runs to 588 residues: Aspartate--tRNA ligase (588 aa).

Glutamate 171 contributes to the L-aspartate binding site. The aspartate stretch occupies residues 195 to 198 (QLFK). Arginine 217 lines the L-aspartate pocket. Residues 217 to 219 (RDE) and glutamine 226 each bind ATP. Residue histidine 447 participates in L-aspartate binding. Glutamate 481 provides a ligand contact to ATP. Arginine 488 is a binding site for L-aspartate. An ATP-binding site is contributed by 533–536 (GLDR).

The protein belongs to the class-II aminoacyl-tRNA synthetase family. Type 1 subfamily. Homodimer.

The protein resides in the cytoplasm. It catalyses the reaction tRNA(Asp) + L-aspartate + ATP = L-aspartyl-tRNA(Asp) + AMP + diphosphate. Functionally, catalyzes the attachment of L-aspartate to tRNA(Asp) in a two-step reaction: L-aspartate is first activated by ATP to form Asp-AMP and then transferred to the acceptor end of tRNA(Asp). This chain is Aspartate--tRNA ligase, found in Aeromonas salmonicida (strain A449).